The primary structure comprises 119 residues: Large ribosomal subunit protein uL22 (119 aa).

The protein belongs to the universal ribosomal protein uL22 family. In terms of assembly, part of the 50S ribosomal subunit.

Its function is as follows. This protein binds specifically to 23S rRNA; its binding is stimulated by other ribosomal proteins, e.g. L4, L17, and L20. It is important during the early stages of 50S assembly. It makes multiple contacts with different domains of the 23S rRNA in the assembled 50S subunit and ribosome. The globular domain of the protein is located near the polypeptide exit tunnel on the outside of the subunit, while an extended beta-hairpin is found that lines the wall of the exit tunnel in the center of the 70S ribosome. This Chlorobium phaeobacteroides (strain DSM 266 / SMG 266 / 2430) protein is Large ribosomal subunit protein uL22.